Consider the following 1008-residue polypeptide: Probable transport protein MmpL10 (1008 aa).

Transmembrane regions (helical) follow at residues 23–43, 202–222, 225–245, 257–277, 301–321, 340–360, 389–409, 835–855, 862–882, 895–915, 940–960, and 961–981; these read WPWV…MTVP, IELV…RNPI, LLPL…VSGV, MIVL…VFLI, ALIS…ITFL, IGIA…LVLA, VAYL…ASLV, DLQL…MALL, IYLV…CVLV, VPGL…MLLA, VITA…LSSI, and ATVV…TFIV.

The protein belongs to the resistance-nodulation-cell division (RND) (TC 2.A.6) family. MmpL subfamily.

It localises to the cell membrane. The sequence is that of Probable transport protein MmpL10 (mmpL10) from Mycobacterium leprae (strain TN).